The following is a 185-amino-acid chain: Jasmonate-induced protein homolog (185 aa).

The protein belongs to the jasmonate-induced protein family.

The chain is Jasmonate-induced protein homolog from Atriplex canescens (Fourwing saltbush).